We begin with the raw amino-acid sequence, 320 residues long: Acetyl-coenzyme A carboxylase carboxyl transferase subunit alpha (320 aa).

Positions 41–295 (RIEEKAGQAL…GDAIAQAFDE (255 aa)) constitute a CoA carboxyltransferase C-terminal domain.

Belongs to the AccA family. Acetyl-CoA carboxylase is a heterohexamer composed of biotin carboxyl carrier protein (AccB), biotin carboxylase (AccC) and two subunits each of ACCase subunit alpha (AccA) and ACCase subunit beta (AccD).

The protein localises to the cytoplasm. The catalysed reaction is N(6)-carboxybiotinyl-L-lysyl-[protein] + acetyl-CoA = N(6)-biotinyl-L-lysyl-[protein] + malonyl-CoA. The protein operates within lipid metabolism; malonyl-CoA biosynthesis; malonyl-CoA from acetyl-CoA: step 1/1. In terms of biological role, component of the acetyl coenzyme A carboxylase (ACC) complex. First, biotin carboxylase catalyzes the carboxylation of biotin on its carrier protein (BCCP) and then the CO(2) group is transferred by the carboxyltransferase to acetyl-CoA to form malonyl-CoA. This is Acetyl-coenzyme A carboxylase carboxyl transferase subunit alpha from Bradyrhizobium sp. (strain ORS 278).